The primary structure comprises 232 residues: Ashwin (232 aa).

Composition is skewed to basic and acidic residues over residues 64–97 (DLPK…DGLR) and 116–127 (KKTENGDNDRLR). Residues 64–232 (DLPKSRWGKM…KRKIQHVTWP (169 aa)) form a disordered region. Positions 130-140 (PQASATSNTFR) are enriched in polar residues. Ser-143 is subject to Phosphoserine. The segment covering 144–156 (DSSSSVSPLVLSS) has biased composition (low complexity). Residues 163–179 (KMEHGNNDNKQNHDLTH) are compositionally biased toward basic and acidic residues. A phosphoserine mark is found at Ser-182, Ser-189, and Ser-193. A Phosphothreonine modification is found at Thr-198.

This sequence belongs to the ashwin family. In terms of assembly, component of the tRNA-splicing ligase complex.

It is found in the nucleus. This is Ashwin from Bos taurus (Bovine).